Reading from the N-terminus, the 136-residue chain is Sec-independent protein translocase protein TatB (136 aa).

The chain crosses the membrane as a helical span at residues Phe-2–Gly-22. The disordered stretch occupies residues Val-107–Thr-136.

This sequence belongs to the TatB family. In terms of assembly, the Tat system comprises two distinct complexes: a TatABC complex, containing multiple copies of TatA, TatB and TatC subunits, and a separate TatA complex, containing only TatA subunits. Substrates initially bind to the TatABC complex, which probably triggers association of the separate TatA complex to form the active translocon.

Its subcellular location is the cell membrane. In terms of biological role, part of the twin-arginine translocation (Tat) system that transports large folded proteins containing a characteristic twin-arginine motif in their signal peptide across membranes. Together with TatC, TatB is part of a receptor directly interacting with Tat signal peptides. TatB may form an oligomeric binding site that transiently accommodates folded Tat precursor proteins before their translocation. In Mycobacteroides abscessus (strain ATCC 19977 / DSM 44196 / CCUG 20993 / CIP 104536 / JCM 13569 / NCTC 13031 / TMC 1543 / L948) (Mycobacterium abscessus), this protein is Sec-independent protein translocase protein TatB.